A 271-amino-acid polypeptide reads, in one-letter code: ELH (271 aa).

Residues 1-28 (MKRPNNRPTNTMSLILCLTLSSLCVSSQ) form the signal peptide. 2 consecutive propeptides follow at residues 29–95 (SASV…NEKR) and 162–184 (AAGG…RRKR). The interval 162 to 190 (AAGGMEQSEGQNPETESHSRRKRSVLTPS) is disordered. A Lysine amide modification is found at Lys241.

Belongs to the molluscan ELH family. Bag cell neurons.

Its subcellular location is the secreted. ELH acts as a neurotransmitter locally, upon neurons of the abdominal ganglion and as a hormone by diffusing into the circulating hemolymph and modulating the activity of other organs. It specifically causes contraction of smooth muscle in the ovotestis and expulsion of the egg string. Its function is as follows. Alpha-BCP decreases the activity of a cluster of neurons in the left upper quadrant of the abdominal ganglion. In terms of biological role, beta-BCP specifically excites 2 neurons, L1 and R1, in the abdominal ganglion. This is ELH from Aplysia californica (California sea hare).